Consider the following 84-residue polypeptide: Small, acid-soluble spore protein gamma-type (84 aa).

Polar residues-rich tracts occupy residues 1-25 (MANS…SAAG) and 34-44 (ASETNAQQVRK). The tract at residues 1-84 (MANSNNFSKT…SAEQNKQQNS (84 aa)) is disordered. 2 consecutive repeats follow at residues 21–47 (QSAA…KQNQ) and 48–74 (QSAG…QQNQ). Low complexity-rich tracts occupy residues 45–57 (QNQQ…GQFG) and 71–84 (QQNQ…QQNS).

Belongs to the gamma-type SASP family.

Its function is as follows. SASP are proteins degraded in the first minutes of spore germination and provide amino acids for both new protein synthesis and metabolism. These proteins may be involved in dormant spore's high resistance to UV light. The sequence is that of Small, acid-soluble spore protein gamma-type (sspE) from Bacillus subtilis (strain 168).